A 242-amino-acid polypeptide reads, in one-letter code: Probable transcriptional regulatory protein Bcep18194_A5621 (242 aa).

Belongs to the TACO1 family.

Its subcellular location is the cytoplasm. The protein is Probable transcriptional regulatory protein Bcep18194_A5621 of Burkholderia lata (strain ATCC 17760 / DSM 23089 / LMG 22485 / NCIMB 9086 / R18194 / 383).